A 447-amino-acid polypeptide reads, in one-letter code: UDP-N-acetylmuramate--L-alanine ligase (447 aa).

Residue 115–121 (GAHGKTS) coordinates ATP.

The protein belongs to the MurCDEF family.

It is found in the cytoplasm. It carries out the reaction UDP-N-acetyl-alpha-D-muramate + L-alanine + ATP = UDP-N-acetyl-alpha-D-muramoyl-L-alanine + ADP + phosphate + H(+). The protein operates within cell wall biogenesis; peptidoglycan biosynthesis. Functionally, cell wall formation. This Streptococcus thermophilus (strain CNRZ 1066) protein is UDP-N-acetylmuramate--L-alanine ligase.